The following is a 618-amino-acid chain: Protease 4 (618 aa).

The Cytoplasmic portion of the chain corresponds to 1-24; sequence MRTLWRFIAGFFKWTWRLLNFVRE. Residues 25–45 traverse the membrane as a helical segment; the sequence is MVLNLFFIFLVLVGVGIWMQV. The Periplasmic portion of the chain corresponds to 46 to 618; it reads SGGDSKETAS…AFCLTCANMR (573 aa). The active-site Proton donor/acceptor is lysine 209. Residue serine 409 is the Nucleophile of the active site.

Belongs to the peptidase S49 family. In terms of assembly, homotetramer.

Its subcellular location is the cell inner membrane. With respect to regulation, inhibited by serine hydrolase inhibitor FP-biotin and by antipain. Its function is as follows. Digests cleaved signal peptides in vitro, its in vivo function is unknown. This activity is necessary to maintain proper secretion of mature proteins across the membrane. This Escherichia coli (strain K12) protein is Protease 4 (sppA).